Reading from the N-terminus, the 290-residue chain is UPF0761 membrane protein YihY (290 aa).

A run of 6 helical transmembrane segments spans residues 44–64 (LLSLVPLIAVVFALFAAFPMF), 104–124 (VGACGLIVTALLLMYAIDSAL), 140–160 (FAVYWMILTLGPLLAGASLAI), 183–203 (VLPLLLSWISFWLLYSIVPTT), 210–230 (AIVGAFVAALLFEAGKKGFAL), and 244–264 (VLAVIPILFVWVYWTWCIVLL).

The protein belongs to the UPF0761 family.

It is found in the cell inner membrane. The chain is UPF0761 membrane protein YihY from Salmonella arizonae (strain ATCC BAA-731 / CDC346-86 / RSK2980).